The chain runs to 664 residues: Chaperone protein DnaK (664 aa).

Position 201 is a phosphothreonine; by autocatalysis (threonine 201). Disordered regions lie at residues 516–538 (DAEKHKEEDKKRREASDARNEAD) and 578–664 (APVE…KPND). Residues 578–592 (APVEKIKDASEELSR) are compositionally biased toward basic and acidic residues. Low complexity-rich tracts occupy residues 600-617 (AMQSQSASAAASSAANAQ) and 638-649 (AGNSASSNSNNE).

Belongs to the heat shock protein 70 family.

Its function is as follows. Acts as a chaperone. In Chlamydia caviae (strain ATCC VR-813 / DSM 19441 / 03DC25 / GPIC) (Chlamydophila caviae), this protein is Chaperone protein DnaK.